Consider the following 303-residue polypeptide: MLTFQQIILTLQDYWDKQGCALLQPYDMEVGAGTSHTATFLRAIGPEPWRAAYVQPSRRPKDGRYGENPNRLQHYYQYQVVLKPAPPEILDLYIGSLKALGIDPTQHDIRFVEDDWENPTLGAWGLGWEVWLNGMEVTQFTYFQQVGGLDCTPTTGEITYGLERLAMYLQDVESVYDLVWTEGANGNRVYYRDVFHQNEVEQSTYNFEHASADMLFAHFNDYEAEAKRLMDVPLALPAYEAALKAAHTFNMLDARGAISVTERAAYIGRIRNLSRAVAQAYYDSRERLGFPMLAGRKAAGEAA.

It belongs to the class-II aminoacyl-tRNA synthetase family. As to quaternary structure, tetramer of two alpha and two beta subunits.

The protein resides in the cytoplasm. The enzyme catalyses tRNA(Gly) + glycine + ATP = glycyl-tRNA(Gly) + AMP + diphosphate. The chain is Glycine--tRNA ligase alpha subunit from Bordetella pertussis (strain Tohama I / ATCC BAA-589 / NCTC 13251).